Reading from the N-terminus, the 689-residue chain is Elongation factor G (689 aa).

A tr-type G domain is found at 8 to 282 (LNTRNIGIMA…AVVDYLPSPL (275 aa)). GTP contacts are provided by residues 17–24 (AHIDAGKT), 81–85 (DTPGH), and 135–138 (NKMD).

The protein belongs to the TRAFAC class translation factor GTPase superfamily. Classic translation factor GTPase family. EF-G/EF-2 subfamily.

Its subcellular location is the cytoplasm. Functionally, catalyzes the GTP-dependent ribosomal translocation step during translation elongation. During this step, the ribosome changes from the pre-translocational (PRE) to the post-translocational (POST) state as the newly formed A-site-bound peptidyl-tRNA and P-site-bound deacylated tRNA move to the P and E sites, respectively. Catalyzes the coordinated movement of the two tRNA molecules, the mRNA and conformational changes in the ribosome. This Mycoplasma mycoides subsp. mycoides SC (strain CCUG 32753 / NCTC 10114 / PG1) protein is Elongation factor G.